A 262-amino-acid chain; its full sequence is Homeobox protein Nkx-6.3 (262 aa).

A DNA-binding region (homeobox) is located at residues 140 to 199 (KKHTRPTFTGHQIFALEKTFEQTKYLAGPERARLAYSLGMTESQVKVWFQNRRTKWRKKS). Residues 197 to 237 (KKSALEPSSSTPRAPGGASGDRAASENEDDEYNKPLDPDSD) are disordered.

In terms of tissue distribution, expressed in the developing CNS and gastro-intestinal tract.

The protein localises to the nucleus. In terms of biological role, putative transcription factor, which may be involved in patterning of central nervous system and pancreas. In Mus musculus (Mouse), this protein is Homeobox protein Nkx-6.3 (Nkx6-3).